The primary structure comprises 156 residues: Ribonuclease pancreatic (156 aa).

A signal peptide spans 1–28 (MALEKSLVLLPLLVLILLVLGWVQPSLG). The substrate site is built by K35 and R38. H40 (proton acceptor) is an active-site residue. N50 and N62 each carry an N-linked (GlcNAc...) asparagine glycan. 4 cysteine pairs are disulfide-bonded: C54-C112, C68-C123, C86-C138, and C93-C100. Substrate is bound by residues 69–73 (KPVNT) and K94. N104 carries N-linked (GlcNAc...) asparagine glycosylation. R113 serves as a coordination point for substrate. H147 functions as the Proton donor in the catalytic mechanism.

The protein belongs to the pancreatic ribonuclease family. Monomer. Interacts with and forms tight 1:1 complexes with RNH1. Dimerization of two such complexes may occur. Interaction with RNH1 inhibits this protein. Pancreas and other tissues and body fluids (indicating it may have other physiological functions besides its role in digestion).

The protein resides in the secreted. The enzyme catalyses an [RNA] containing cytidine + H2O = an [RNA]-3'-cytidine-3'-phosphate + a 5'-hydroxy-ribonucleotide-3'-[RNA].. The catalysed reaction is an [RNA] containing uridine + H2O = an [RNA]-3'-uridine-3'-phosphate + a 5'-hydroxy-ribonucleotide-3'-[RNA].. Endonuclease that catalyzes the cleavage of RNA on the 3' side of pyrimidine nucleotides. Acts on single-stranded and double-stranded RNA. In Pongo pygmaeus (Bornean orangutan), this protein is Ribonuclease pancreatic (RNASE1).